The primary structure comprises 156 residues: Small ribosomal subunit protein uS7 (156 aa).

The protein belongs to the universal ribosomal protein uS7 family. As to quaternary structure, part of the 30S ribosomal subunit. Contacts proteins S9 and S11.

In terms of biological role, one of the primary rRNA binding proteins, it binds directly to 16S rRNA where it nucleates assembly of the head domain of the 30S subunit. Is located at the subunit interface close to the decoding center, probably blocks exit of the E-site tRNA. In Glaesserella parasuis serovar 5 (strain SH0165) (Haemophilus parasuis), this protein is Small ribosomal subunit protein uS7.